The primary structure comprises 463 residues: Argininosuccinate lyase (463 aa).

It belongs to the lyase 1 family. Argininosuccinate lyase subfamily.

The protein resides in the cytoplasm. The enzyme catalyses 2-(N(omega)-L-arginino)succinate = fumarate + L-arginine. It functions in the pathway amino-acid biosynthesis; L-arginine biosynthesis; L-arginine from L-ornithine and carbamoyl phosphate: step 3/3. This is Argininosuccinate lyase from Chlorobaculum tepidum (strain ATCC 49652 / DSM 12025 / NBRC 103806 / TLS) (Chlorobium tepidum).